Consider the following 218-residue polypeptide: Cytochrome b6 (218 aa).

Residues 35–55 (IFYCLGGITLVCFLIQFATGF) traverse the membrane as a helical segment. Residue cysteine 38 coordinates heme c. Histidine 89 and histidine 103 together coordinate heme b. The next 3 membrane-spanning stretches (helical) occupy residues 93 to 113 (ASMMVLMLILHVFRVYLTGGF), 119 to 139 (LTWVTGVTMAVITVSFGVTGY), and 189 to 209 (LHTFVMPWLLAVFMLMHFLMI). Heme b is bound by residues histidine 190 and histidine 205.

It belongs to the cytochrome b family. PetB subfamily. As to quaternary structure, the 4 large subunits of the cytochrome b6-f complex are cytochrome b6, subunit IV (17 kDa polypeptide, PetD), cytochrome f and the Rieske protein, while the 4 small subunits are PetG, PetL, PetM and PetN. The complex functions as a dimer. Heme b is required as a cofactor. Requires heme c as cofactor.

The protein resides in the cellular thylakoid membrane. Component of the cytochrome b6-f complex, which mediates electron transfer between photosystem II (PSII) and photosystem I (PSI), cyclic electron flow around PSI, and state transitions. This chain is Cytochrome b6, found in Parasynechococcus marenigrum (strain WH8102).